The sequence spans 79 residues: Acyl carrier protein (79 aa).

Residues 2-77 (DNIEQRVKKI…QAIDYATAHV (76 aa)) enclose the Carrier domain. Ser-37 bears the O-(pantetheine 4'-phosphoryl)serine mark.

The protein belongs to the acyl carrier protein (ACP) family. In terms of processing, 4'-phosphopantetheine is transferred from CoA to a specific serine of apo-ACP by AcpS. This modification is essential for activity because fatty acids are bound in thioester linkage to the sulfhydryl of the prosthetic group.

Its subcellular location is the cytoplasm. It functions in the pathway lipid metabolism; fatty acid biosynthesis. Carrier of the growing fatty acid chain in fatty acid biosynthesis. The sequence is that of Acyl carrier protein from Cupriavidus pinatubonensis (strain JMP 134 / LMG 1197) (Cupriavidus necator (strain JMP 134)).